A 549-amino-acid chain; its full sequence is Zinc finger protein 266 (549 aa).

Residues 1 to 42 enclose the KRAB domain; that stretch reads MLENYKNLATVGYQLFKPSLISWLEQEESRTVQRGDFQASEW. A C2H2-type 1; degenerate zinc finger spans residues 156–178; sequence FDCSDSGKSFINHSHLQGHLRTH. A C2H2-type 2; degenerate zinc finger spans residues 184 to 206; that stretch reads HEWKECGRGFIHSTDLAVRIQTH. C2H2-type zinc fingers lie at residues 212–234, 240–262, 268–290, 296–318, 324–346, 352–374, 380–402, 408–430, 436–458, 464–486, 492–514, and 520–542; these read YKCKECGKGFRYSAYLNIHMGTH, YECKECGKAFTRSCQLTQHRKTH, YKCKDCGRAFTVSSCLSQHMKIH, YECKECGIAFTRSSQLTEHLKTH, FECKICGKSFRNSSCLSDHFRIH, YKCKDCGKAFTQNSDLTKHARTH, YECKECGKAFARSSRLSEHTRTH, FECVKCGKAFAISSNLSGHLRIH, FECLECGKAFTHSSSLNNHMRTH, FTCMECGKAFKFPTCVNLHMRIH, YKCKQCGKSFSYSNSFQLHERTH, and YECKECGKAFSSSSSFRNHERRH. The segment at 530–549 is disordered; sequence SSSSSFRNHERRHADERLSA.

Belongs to the krueppel C2H2-type zinc-finger protein family.

It localises to the nucleus. May be involved in transcriptional regulation. This Homo sapiens (Human) protein is Zinc finger protein 266 (ZNF266).